The chain runs to 740 residues: Ion-translocating oxidoreductase complex subunit C (740 aa).

2 consecutive 4Fe-4S ferredoxin-type domains span residues Gly-369 to Tyr-397 and Lys-407 to Phe-436. Residues Cys-377, Cys-380, Cys-383, Cys-387, Cys-416, Cys-419, Cys-422, and Cys-426 each contribute to the [4Fe-4S] cluster site. The segment at Lys-602–Pro-714 is disordered. Over residues Gln-605–Gln-615 the composition is skewed to low complexity.

It belongs to the 4Fe4S bacterial-type ferredoxin family. RnfC subfamily. As to quaternary structure, the complex is composed of six subunits: RsxA, RsxB, RsxC, RsxD, RsxE and RsxG. [4Fe-4S] cluster serves as cofactor.

Its subcellular location is the cell inner membrane. Functionally, part of a membrane-bound complex that couples electron transfer with translocation of ions across the membrane. Required to maintain the reduced state of SoxR. The sequence is that of Ion-translocating oxidoreductase complex subunit C from Escherichia coli O17:K52:H18 (strain UMN026 / ExPEC).